The primary structure comprises 179 residues: Early E3 20.1 kDa glycoprotein (179 aa).

5 N-linked (GlcNAc...) asparagine; by host glycosylation sites follow: Asn-29, Asn-57, Asn-70, Asn-75, and Asn-123.

The protein belongs to the adenoviridae E3_20 family.

Its function is as follows. E3 proteins seem to be dispensable for virus growth in tissue culture cells. They are potentially important for virus growth under special conditions; E3 region may help adenoviruses to evade the immune surveillance of the host. This is Early E3 20.1 kDa glycoprotein from Homo sapiens (Human).